Reading from the N-terminus, the 164-residue chain is MLAYTFPSFNFYVNGFFSFLFLFLFLFPSLLRFYVILCRPLQVATYPLNRCQQYSSLAIFTASGFWLLVLVPRAKGPSTRRHCYRQLAPTHHRPFFSIFGWAVSGIRPLPEIFTWICASPFFLHSLTPPTFSHFSVYQEEKKEKRRTPKNTEQEGNRMCIWMSG.

2 helical membrane passes run 11–31 (FYVN…PSLL) and 51–71 (CQQY…LVLV).

Its subcellular location is the membrane. This is an uncharacterized protein from Saccharomyces cerevisiae (strain ATCC 204508 / S288c) (Baker's yeast).